A 176-amino-acid polypeptide reads, in one-letter code: Dual-action ribosomal maturation protein DarP (176 aa).

A compositionally biased stretch (acidic residues) spans 1–16 (MRLIDPDADLEFDPDS). The interval 1–29 (MRLIDPDADLEFDPDSVYDGPSKSQKKRE) is disordered.

It belongs to the DarP family.

The protein localises to the cytoplasm. Member of a network of 50S ribosomal subunit biogenesis factors which assembles along the 30S-50S interface, preventing incorrect 23S rRNA structures from forming. Promotes peptidyl transferase center (PTC) maturation. The sequence is that of Dual-action ribosomal maturation protein DarP from Thiobacillus denitrificans (strain ATCC 25259 / T1).